The sequence spans 270 residues: MIOREX complex component 3 (270 aa).

The N-terminal 12 residues, 1–12, are a transit peptide targeting the mitochondrion; sequence MSRTIPFLFKLV.

Associates with the mitochondrial ribosome.

The protein resides in the mitochondrion. Component of MIOREX complexes, large expressome-like assemblies of ribosomes with factors involved in all the steps of post-transcriptional gene expression. This Saccharomyces cerevisiae (strain ATCC 204508 / S288c) (Baker's yeast) protein is MIOREX complex component 3.